Consider the following 115-residue polypeptide: Dolichyl-diphosphooligosaccharide--protein glycosyltransferase subunit DAD2 (115 aa).

Topologically, residues 1–31 are cytoplasmic; it reads MVKSTSKDAQDLFHSLHSAYTATPTNLKIID. A helical membrane pass occupies residues 32-52; sequence LYVCFAVFTALIQVAYMALVG. The Lumenal segment spans residues 53–55; sequence SFP. A helical transmembrane segment spans residues 56 to 76; sequence FNSFLSGVLSCIGTAVLAVCL. The Cytoplasmic segment spans residues 77–94; that stretch reads RIQVNKENKEFKDLAPER. Residues 95–115 traverse the membrane as a helical segment; it reads AFADFVLCNLVLHLVIINFLG.

It belongs to the DAD/OST2 family. Component of the oligosaccharyltransferase (OST) complex.

The protein localises to the endoplasmic reticulum membrane. It participates in protein modification; protein glycosylation. Functionally, subunit of the oligosaccharyl transferase (OST) complex that catalyzes the initial transfer of a defined glycan (Glc(3)Man(9)GlcNAc(2) in eukaryotes) from the lipid carrier dolichol-pyrophosphate to an asparagine residue within an Asn-X-Ser/Thr consensus motif in nascent polypeptide chains, the first step in protein N-glycosylation. N-glycosylation occurs cotranslationally and the complex associates with the Sec61 complex at the channel-forming translocon complex that mediates protein translocation across the endoplasmic reticulum (ER). All subunits are required for a maximal enzyme activity. This is Dolichyl-diphosphooligosaccharide--protein glycosyltransferase subunit DAD2 (DAD2) from Arabidopsis thaliana (Mouse-ear cress).